The sequence spans 305 residues: Sulfate adenylyltransferase subunit 2 (305 aa).

The protein belongs to the PAPS reductase family. CysD subfamily. As to quaternary structure, heterodimer composed of CysD, the smaller subunit, and CysN.

It carries out the reaction sulfate + ATP + H(+) = adenosine 5'-phosphosulfate + diphosphate. Its pathway is sulfur metabolism; hydrogen sulfide biosynthesis; sulfite from sulfate: step 1/3. In terms of biological role, with CysN forms the ATP sulfurylase (ATPS) that catalyzes the adenylation of sulfate producing adenosine 5'-phosphosulfate (APS) and diphosphate, the first enzymatic step in sulfur assimilation pathway. APS synthesis involves the formation of a high-energy phosphoric-sulfuric acid anhydride bond driven by GTP hydrolysis by CysN coupled to ATP hydrolysis by CysD. This is Sulfate adenylyltransferase subunit 2 from Pseudomonas entomophila (strain L48).